The chain runs to 436 residues: 3-ketoacyl-CoA thiolase (436 aa).

C99 functions as the Acyl-thioester intermediate in the catalytic mechanism. Active-site proton acceptor residues include H392 and C422.

Belongs to the thiolase-like superfamily. Thiolase family. As to quaternary structure, heterotetramer of two alpha chains (FadJ) and two beta chains (FadI).

The protein resides in the cytoplasm. The catalysed reaction is an acyl-CoA + acetyl-CoA = a 3-oxoacyl-CoA + CoA. It participates in lipid metabolism; fatty acid beta-oxidation. In terms of biological role, catalyzes the final step of fatty acid oxidation in which acetyl-CoA is released and the CoA ester of a fatty acid two carbons shorter is formed. The chain is 3-ketoacyl-CoA thiolase from Escherichia coli O1:K1 / APEC.